A 48-amino-acid polypeptide reads, in one-letter code: Sperm protamine P1 (48 aa).

The protein belongs to the protamine P1 family. In terms of tissue distribution, testis.

It is found in the nucleus. It localises to the chromosome. In terms of biological role, protamines substitute for histones in the chromatin of sperm during the haploid phase of spermatogenesis. They compact sperm DNA into a highly condensed, stable and inactive complex. This Corynorhinus townsendii (Townsend's big-eared bat) protein is Sperm protamine P1 (PRM1).